Here is a 156-residue protein sequence, read N- to C-terminus: ATP synthase subunit b (156 aa).

The chain crosses the membrane as a helical span at residues 11 to 31 (AIAFVLFVLFCMKYVWPPLMA).

This sequence belongs to the ATPase B chain family. F-type ATPases have 2 components, F(1) - the catalytic core - and F(0) - the membrane proton channel. F(1) has five subunits: alpha(3), beta(3), gamma(1), delta(1), epsilon(1). F(0) has three main subunits: a(1), b(2) and c(10-14). The alpha and beta chains form an alternating ring which encloses part of the gamma chain. F(1) is attached to F(0) by a central stalk formed by the gamma and epsilon chains, while a peripheral stalk is formed by the delta and b chains.

Its subcellular location is the cell inner membrane. F(1)F(0) ATP synthase produces ATP from ADP in the presence of a proton or sodium gradient. F-type ATPases consist of two structural domains, F(1) containing the extramembraneous catalytic core and F(0) containing the membrane proton channel, linked together by a central stalk and a peripheral stalk. During catalysis, ATP synthesis in the catalytic domain of F(1) is coupled via a rotary mechanism of the central stalk subunits to proton translocation. Functionally, component of the F(0) channel, it forms part of the peripheral stalk, linking F(1) to F(0). The chain is ATP synthase subunit b from Sodalis glossinidius (strain morsitans).